Consider the following 904-residue polypeptide: Mdm2-binding protein (904 aa).

The tract at residues 19-38 is disordered; that stretch reads ASREAEHGPEVSSGEGTENQ. Positions 521 to 904 are interaction with MDM2; that stretch reads MILRKMDKIK…DWVLEKTSKK (384 aa). Phosphoserine occurs at positions 597, 639, 703, and 707. Disordered regions lie at residues 754–784 and 800–830; these read ESSESLLSQTTGNSNHYHHHVTSRKPQTERS and PKLATKTSSGQKSMHESKTSRQIKESRSQKH. Residues 812-830 show a composition bias toward basic and acidic residues; that stretch reads SMHESKTSRQIKESRSQKH.

Belongs to the MTBP family. In terms of assembly, interacts with MDM2.

In terms of biological role, inhibits cell migration in vitro and suppresses the invasive behavior of tumor cells. May play a role in MDM2-dependent p53/TP53 homeostasis in unstressed cells. Inhibits autoubiquitination of MDM2, thereby enhancing MDM2 stability. This promotes MDM2-mediated ubiquitination of p53/TP53 and its subsequent degradation. The sequence is that of Mdm2-binding protein (MTBP) from Homo sapiens (Human).